The primary structure comprises 421 residues: ATP-dependent RNA helicase RhlB (421 aa).

A Q motif motif is present at residues 9–37; that stretch reads QKFSDFALHPKVVEALEKKGFHNCTPIQA. The 180-residue stretch at 40–219 folds into the Helicase ATP-binding domain; the sequence is LPLTLAGRDV…FEQMNNAEYI (180 aa). 53-60 serves as a coordination point for ATP; that stretch reads AQTGTGKT. A DEAD box motif is present at residues 165–168; it reads DEAD. Residues 245-390 enclose the Helicase C-terminal domain; sequence RLLQTLIEEE…VSKYNPDALM (146 aa). Positions 392 to 421 are disordered; that stretch reads DLPKPLRLTRPRTGNGPRRTGAPRNRRRSG. Over residues 402–414 the composition is skewed to low complexity; sequence PRTGNGPRRTGAP.

It belongs to the DEAD box helicase family. RhlB subfamily. Component of the RNA degradosome, which is a multiprotein complex involved in RNA processing and mRNA degradation.

Its subcellular location is the cytoplasm. The catalysed reaction is ATP + H2O = ADP + phosphate + H(+). Its function is as follows. DEAD-box RNA helicase involved in RNA degradation. Has RNA-dependent ATPase activity and unwinds double-stranded RNA. This chain is ATP-dependent RNA helicase RhlB, found in Escherichia coli O139:H28 (strain E24377A / ETEC).